The chain runs to 295 residues: Sulfotransferase 1A1 (295 aa).

Position 48–53 (48–53 (KSGTTW)) interacts with 3'-phosphoadenylyl sulfate. Residue 106–108 (KTH) participates in substrate binding. Residue H108 is the Proton acceptor of the active site. 3'-phosphoadenylyl sulfate is bound by residues R130, S138, Y193, 227–232 (TSFKEM), and 255–259 (FMRKG). Phosphoserine is present on S138.

Belongs to the sulfotransferase 1 family. Homodimer. In terms of tissue distribution, ubiquitously expressed in canine tissues with highest expression in male and female liver.

Its subcellular location is the cytoplasm. The catalysed reaction is a phenol + 3'-phosphoadenylyl sulfate = an aryl sulfate + adenosine 3',5'-bisphosphate + H(+). It carries out the reaction 17beta-estradiol + 3'-phosphoadenylyl sulfate = 17beta-estradiol 3-sulfate + adenosine 3',5'-bisphosphate + H(+). The enzyme catalyses 4-ethylphenol + 3'-phosphoadenylyl sulfate = 4-ethylphenyl sulfate + adenosine 3',5'-bisphosphate + H(+). It catalyses the reaction 4-nitrophenol + 3'-phosphoadenylyl sulfate = 4-nitrophenyl sulfate + adenosine 3',5'-bisphosphate. The catalysed reaction is dopamine + 3'-phosphoadenylyl sulfate = dopamine 3-O-sulfate + adenosine 3',5'-bisphosphate + H(+). It carries out the reaction dopamine + 3'-phosphoadenylyl sulfate = dopamine 4-O-sulfate + adenosine 3',5'-bisphosphate + H(+). The enzyme catalyses 3,3',5-triiodo-L-thyronine + 3'-phosphoadenylyl sulfate = 3,3',5-triiodo-L-thyronine sulfate + adenosine 3',5'-bisphosphate + H(+). It catalyses the reaction 3,3',5'-triiodo-L-thyronine + 3'-phosphoadenylyl sulfate = 3,3',5'-triiodo-L-thyronine sulfate + adenosine 3',5'-bisphosphate + H(+). The catalysed reaction is 3,3'-diiodo-L-thyronine + 3'-phosphoadenylyl sulfate = 3,3'-diiodo-L-thyronine sulfate + adenosine 3',5'-bisphosphate + H(+). It carries out the reaction L-thyroxine + 3'-phosphoadenylyl sulfate = L-thyroxine sulfate + adenosine 3',5'-bisphosphate + H(+). Its function is as follows. Sulfotransferase that utilizes 3'-phospho-5'-adenylyl sulfate (PAPS) as sulfonate donor to catalyze the sulfate conjugation of a wide variety of acceptor molecules bearing a hydroxyl or an amine group. Sulfonation increases the water solubility of most compounds, and therefore their renal excretion, but it can also result in bioactivation to form active metabolites. Displays broad substrate specificity for small phenolic compounds. Plays an important role in the sulfonation of endogenous molecules such as steroid hormones. Mediates also the metabolic activation of carcinogenic N-hydroxyarylamines leading to highly reactive intermediates capable of forming DNA adducts, potentially resulting in mutagenesis. May play a role in gut microbiota-host metabolic interaction. O-sulfonates 4-ethylphenol (4-EP), a dietary tyrosine-derived metabolite produced by gut bacteria. The product 4-EPS crosses the blood-brain barrier and may negatively regulate oligodendrocyte maturation and myelination, affecting the functional connectivity of different brain regions associated with the limbic system. Catalyzes the sulfate conjugation of dopamine. Catalyzes the sulfation of T4 (L-thyroxine/3,5,3',5'-tetraiodothyronine), T3 (3,5,3'-triiodothyronine), rT3 (3,3',5'-triiodothyronine) and 3,3'-T2 (3,3'-diiodothyronine), with a substrate preference of 3,3'-T2 &gt; rT3 &gt; T3 &gt; T4. This chain is Sulfotransferase 1A1 (SULT1A1), found in Canis lupus familiaris (Dog).